The primary structure comprises 96 residues: Small cysteine and glycine repeat-containing protein 7 (96 aa).

The tract at residues 4 to 80 is 14 X 2 AA repeats of CG; the sequence is CGCGSCGGCG…TCGSCGCGCG (77 aa).

It belongs to the KRTAP type 28 family.

Functionally, in the hair cortex, hair keratin intermediate filaments are embedded in an interfilamentous matrix, consisting of hair keratin-associated proteins (KRTAP), which are essential for the formation of a rigid and resistant hair shaft through their extensive disulfide bond cross-linking with abundant cysteine residues of hair keratins. The matrix proteins include the high-sulfur and high-glycine-tyrosine keratins. The protein is Small cysteine and glycine repeat-containing protein 7 of Homo sapiens (Human).